The chain runs to 98 residues: Large ribosomal subunit protein eL21 (98 aa).

Residues 1-23 (MVDRKGKGFRRKTRDKLSKHPRQ) are disordered. Over residues 7 to 23 (KGFRRKTRDKLSKHPRQ) the composition is skewed to basic residues.

Belongs to the eukaryotic ribosomal protein eL21 family.

This is Large ribosomal subunit protein eL21 from Nanoarchaeum equitans (strain Kin4-M).